A 264-amino-acid polypeptide reads, in one-letter code: Neurexophilin-2 (264 aa).

An N-terminal signal peptide occupies residues 1-22; that stretch reads MRLRPLPLVVVPGLLQLLFCDS. The segment at 23-90 is II; the sequence is EKVVHATEGL…WDWLANITEV (68 aa). N-linked (GlcNAc...) asparagine glycosylation is found at Asn-86, Asn-139, Asn-149, and Asn-155. The tract at residues 91–169 is III; that stretch reads QEPLARTKRR…LVPPSKVVEF (79 aa). Residues 170–178 form an IV (linker domain) region; it reads EVSPQSTLE. The v (Cys-rich) stretch occupies residues 179–264; it reads TKESKSFNCR…HSETPYLSSG (86 aa).

It belongs to the neurexophilin family. Post-translationally, may be proteolytically processed at the boundary between the N-terminal non-conserved and the central conserved domain in neuron-like cells. As to expression, brain, only in a scattered subpopulation of neurons that probably represent inhibitory interneurons.

Its subcellular location is the secreted. Its function is as follows. May be signaling molecules that resemble neuropeptides and that act by binding to alpha-neurexins and possibly other receptors. In Bos taurus (Bovine), this protein is Neurexophilin-2 (NXPH2).